Consider the following 259-residue polypeptide: ATP synthase subunit a (259 aa).

A propeptide spans 1-7 (MTNNYIN) (removed in mature form). A run of 5 helical transmembrane segments spans residues 36–56 (FSLYTLFVVLVISLTFILSIG), 95–115 (YVPLVYTLFTFILVANLIGMV), 125–145 (LIYIIGISVSLWIGLTILGLF), 164–206 (LVPV…NLVK), and 211–253 (INYF…SYLK).

As to quaternary structure, F-type ATP synthases have 2 components, the catalytic core F(1) and the membrane-embedded component F(0), linked together by a central stalk and a peripheral stalk. The central stalk, also called rotor shaft, is often seen as part of F(1). The peripheral stalk is seen as part of F(0). F(0) contains the membrane channel next to the rotor. F-type ATP synthases form dimers but each monomer functions independently in ATP generation. The dimer consists of 18 different polypeptides: ATP1 (subunit alpha, part of F(1), 3 molecules per monomer), ATP2 (subunit beta, part of F(1), 3 molecules per monomer), ATP3 (subunit gamma, part of the central stalk), ATP4 (subunit b, part of the peripheral stalk), ATP5/OSCP (subunit 5/OSCP, part of the peripheral stalk), ATP6 (subunit a, part of the peripheral stalk), ATP7 (subunit d, part of the peripheral stalk), ATP8 (subunit 8, part of the peripheral stalk), OLI1 (subunit c, part of the rotor, 10 molecules per monomer), ATP14 (subunit h, part of the peripheral stalk), ATP15 (subunit epsilon, part of the central stalk), ATP16 (subunit delta, part of the central stalk), ATP17 (subunit f, part of the peripheral stalk), ATP18 (subunit i/j, part of the peripheral stalk). Dimer-specific subunits are ATP19 (subunit k, at interface between monomers), ATP20 (subunit g, at interface between monomers), TIM11 (subunit e, at interface between monomers). Also contains subunit L.

Its subcellular location is the mitochondrion inner membrane. Functionally, mitochondrial membrane ATP synthase (F(1)F(0) ATP synthase or Complex V) produces ATP from ADP in the presence of a proton gradient across the membrane which is generated by electron transport complexes of the respiratory chain. F-type ATP synthases consist of two structural domains, F(1) - containing the extramembraneous catalytic core, and F(0) - containing the membrane proton channel, linked together by a central stalk and a peripheral stalk. During catalysis, ATP synthesis in the catalytic domain of F(1) is coupled via a rotary mechanism of the central stalk subunits to proton translocation. Key component of the proton channel; it may play a direct role in the translocation of protons across the membrane. In Pichia angusta (Yeast), this protein is ATP synthase subunit a.